A 1378-amino-acid chain; its full sequence is Attractin-like protein 1 (1378 aa).

The first 51 residues, 1–51, serve as a signal peptide directing secretion; sequence MEPGVRARSGAPQPASPVLWRARPAGGGGASSWLLLDGNSWLLCYGFLYLA. The EGF-like 1 domain occupies 52–90; that stretch reads LYAQVSQSKPCERTGSCFSGRCVNSTCLCDPGWVGDQCQ. Topologically, residues 52–1229 are extracellular; it reads LYAQVSQSKP…FSQHNTIMDL (1178 aa). Intrachain disulfides connect Cys-62/Cys-78, Cys-80/Cys-89, and Cys-92/Cys-118. An N-linked (GlcNAc...) asparagine glycan is attached at Asn-75. One can recognise a CUB domain in the interval 92-208; sequence CQGRFKLTEP…TGFNIFYSIN (117 aa). Residues Asn-173 and Asn-197 are each glycosylated (N-linked (GlcNAc...) asparagine). Residues 206 to 244 form the EGF-like 2 domain; the sequence is SINSCPNNCSGHGKCTTSVSVASQVYCECDKYWKGEACD. Intrachain disulfides connect Cys-210–Cys-220, Cys-214–Cys-232, and Cys-234–Cys-243. Kelch repeat units follow at residues 315–364, 366–414, 426–474, 479–530, 532–590, and 591–637; these read FMWV…LYQE, IFMY…EGHS, VMIV…SVYD, SIYV…LING, MLIF…VING, and SMYI…WNKN. Residue Asn-379 is glycosylated (N-linked (GlcNAc...) asparagine). PSI domains are found at residues 613–656, 665–708, and 714–759; these read NCKA…AKCP, RCYR…TKCH, and ICNK…DACL. Residue Asn-703 is glycosylated (N-linked (GlcNAc...) asparagine). Residues 754–872 form the C-type lectin domain; that stretch reads VGDACLRINS…TSMADGLVCE (119 aa). A disulfide bridge connects residues Cys-775 and Cys-871. Asn-777 and Asn-897 each carry an N-linked (GlcNAc...) asparagine glycan. PSI domains lie at 888 to 938 and 941 to 1011; these read PCSL…ATCS and NCSG…IQCP. 8 disulfides stabilise this stretch: Cys-1013/Cys-1021, Cys-1015/Cys-1027, Cys-1030/Cys-1039, Cys-1042/Cys-1056, Cys-1059/Cys-1068, Cys-1061/Cys-1075, Cys-1077/Cys-1087, and Cys-1090/Cys-1105. Laminin EGF-like domains are found at residues 1013-1058 and 1059-1107; these read CQCN…QCTA and CTCG…TCYY. An N-linked (GlcNAc...) asparagine glycan is attached at Asn-1156. Residues 1230–1250 traverse the membrane as a helical segment; that stretch reads VQFFVTFFSCFLSLLLVAAVV. Residues 1251–1378 lie on the Cytoplasmic side of the membrane; that stretch reads WKIKQTCWAS…HLSTRQGTCV (128 aa). An interaction with MC4R region spans residues 1287-1324; the sequence is VGAEQTDFLRGPLEGAPKPIAIEPCAGNRAAVLTVFLC. The segment at 1351–1378 is disordered; that stretch reads QQKPSDNKDKTSGVRNRKHLSTRQGTCV.

Interacts with MC4R. Highly expressed in brain, heart, lung, kidney and liver. In the central nervous system, it is highly expressed in the dentate gyrus, CA1-3 regions of the hippocampus, and the ventral taenia tecta.

It localises to the cell membrane. Its function is as follows. May play a role in melanocortin signaling pathways that regulate energy homeostasis. The chain is Attractin-like protein 1 (Atrnl1) from Mus musculus (Mouse).